The chain runs to 695 residues: Segment polarity protein dishevelled homolog DVL-1 (695 aa).

Positions 1-85 constitute a DIX domain; sequence MAETKIIYHM…RVVSWLVLAE (85 aa). The segment at 89–236 is disordered; the sequence is SDAGSQGTDS…RLRQTDRASS (148 aa). A compositionally biased stretch (basic residues) spans 142–151; it reads SHRRERARRR. The span at 152-171 shows a compositional bias: basic and acidic residues; it reads NRDEAARTNGHPRGDRRREL. Low complexity predominate over residues 177 to 192; sequence SASTVLSSELESSSFI. Ser194 is subject to Phosphoserine. The segment covering 201–214 has biased composition (low complexity); the sequence is SRLSSSTEQSTSSR. The span at 215-228 shows a compositional bias: basic residues; it reads LIRKHKCRRRKQRL. A PDZ domain is found at 251–323; sequence TVTLNMERHH…NDDAVRVLRE (73 aa). The DEP domain maps to 425 to 499; that stretch reads PDSGLEIRDR…SEQCYYVFGD (75 aa). A compositionally biased stretch (low complexity) spans 551–580; it reads PAYQDPGFSYGSGSAGSQQSEGSKSSGSTR. Residues 551-641 form a disordered region; sequence PAYQDPGFSY…SQASAVAPGL (91 aa). The segment covering 622 to 635 has biased composition (polar residues); the sequence is SQLSRGSSPRSQAS.

The protein belongs to the DSH family. Interacts with BRD7 and INVS. Interacts (via PDZ domain) with the VANGL1 and VANGL2 (via C-terminus). Interacts (via PDZ domain) with NXN. Interacts with CXXC4. Interacts with ARRB1; the interaction is enhanced by phosphorylation of DVL1. Interacts with CYLD. Interacts (via PDZ domain) with RYK. Self-associates (via DIX domain) and forms higher homooligomers. Interacts (via PDZ domain) with DACT1 and FZD7, where DACT1 and FZD7 compete for the same binding site. Interacts (via DEP domain) with MUSK; the interaction is direct and mediates the formation a DVL1, MUSK and PAK1 ternary complex involved in AChR clustering. Interacts (via PDZ domain) with TMEM88. Interacts with DCDC2. Interacts with FOXK2. Interacts with PKD1 (via extracellular domain). Interacts (via PDZ domain) with CCDC88C/DAPLE; competes with CCDC88C for binding to frizzled receptor FZD7 and dissociates from CCDC88C following initiation of non-canonical Wnt signaling when CCDC88C displaces DVL1 from ligand-activated FZD7. Post-translationally, ubiquitinated; undergoes both 'Lys-48'-linked ubiquitination, leading to its subsequent degradation by the ubiquitin-proteasome pathway, and 'Lys-63'-linked ubiquitination. The interaction with INVS is required for ubiquitination. Deubiquitinated by CYLD, which acts on 'Lys-63'-linked ubiquitin chains.

It is found in the cell membrane. The protein resides in the cytoplasm. The protein localises to the cytosol. Its subcellular location is the cytoplasmic vesicle. In terms of biological role, participates in Wnt signaling by binding to the cytoplasmic C-terminus of frizzled family members and transducing the Wnt signal to down-stream effectors. Plays a role both in canonical and non-canonical Wnt signaling. Plays a role in the signal transduction pathways mediated by multiple Wnt genes. Required for LEF1 activation upon WNT1 and WNT3A signaling. DVL1 and PAK1 form a ternary complex with MUSK which is important for MUSK-dependent regulation of AChR clustering during the formation of the neuromuscular junction (NMJ). The sequence is that of Segment polarity protein dishevelled homolog DVL-1 (Dvl1) from Rattus norvegicus (Rat).